A 208-amino-acid chain; its full sequence is MSSGTNKIVESIKSEAQEKADKIIQDAQAEIATINSDAEKTAEAEKNKILDNGKKQSDMKYQQIISEAKMNARRAELGAKEEVIEAAFAKATEDLKAKASSDDAEYSESLIKMIEEATEELGGGDLIVQVKESDVAKVEGHLKKLSADLATKTGVSTTLVLGEPIDAIGGAILKTRNGDIEVNNTIESRLDRFKGLLRSEVANVLFKN.

The disordered stretch occupies residues 37–57; it reads DAEKTAEAEKNKILDNGKKQS.

It belongs to the V-ATPase E subunit family. As to quaternary structure, has multiple subunits with at least A(3), B(3), C, D, E, F, H, I and proteolipid K(x).

Its subcellular location is the cell membrane. Component of the A-type ATP synthase that produces ATP from ADP in the presence of a proton gradient across the membrane. The polypeptide is A-type ATP synthase subunit E (Methanobrevibacter smithii (strain ATCC 35061 / DSM 861 / OCM 144 / PS)).